The following is a 482-amino-acid chain: Dual specificity protein phosphatase 10 (482 aa).

The 118-residue stretch at 168 to 285 (PSQGPVIIDC…FKQNHENLCD (118 aa)) folds into the Rhodanese domain. The interaction with MAP kinases stretch occupies residues 199 to 215 (KISRRRLQQGKITVLDL). Residues 321–464 (ELTPILPFLF…LLEFEEDLNN (144 aa)) enclose the Tyrosine-protein phosphatase domain. The active-site Phosphocysteine intermediate is the Cys-408.

Belongs to the protein-tyrosine phosphatase family. Non-receptor class dual specificity subfamily. As to quaternary structure, monomer. Interacts with MAPK14. In terms of tissue distribution, expressed in keratinocytes (at protein level). Detected in brain.

It localises to the cytoplasm. The protein resides in the nucleus. It catalyses the reaction O-phospho-L-tyrosyl-[protein] + H2O = L-tyrosyl-[protein] + phosphate. The enzyme catalyses O-phospho-L-seryl-[protein] + H2O = L-seryl-[protein] + phosphate. It carries out the reaction O-phospho-L-threonyl-[protein] + H2O = L-threonyl-[protein] + phosphate. Protein phosphatase involved in the inactivation of MAP kinases. Has a specificity for the MAPK11/MAPK12/MAPK13/MAPK14 subfamily. It preferably dephosphorylates p38. The protein is Dual specificity protein phosphatase 10 (DUSP10) of Homo sapiens (Human).